Here is a 103-residue protein sequence, read N- to C-terminus: Histone H4 (103 aa).

Residues 1–14 (MSGRGKGGKGLGKG) show a composition bias toward gly residues. A disordered region spans residues 1–20 (MSGRGKGGKGLGKGGAKRHR). A DNA-binding region spans residues 17-21 (KRHRK).

It belongs to the histone H4 family. In terms of assembly, the nucleosome is a histone octamer containing two molecules each of H2A, H2B, H3 and H4 assembled in one H3-H4 heterotetramer and two H2A-H2B heterodimers. The octamer wraps approximately 147 bp of DNA.

It is found in the nucleus. The protein localises to the chromosome. Its function is as follows. Core component of nucleosome. Nucleosomes wrap and compact DNA into chromatin, limiting DNA accessibility to the cellular machineries which require DNA as a template. Histones thereby play a central role in transcription regulation, DNA repair, DNA replication and chromosomal stability. DNA accessibility is regulated via a complex set of post-translational modifications of histones, also called histone code, and nucleosome remodeling. The polypeptide is Histone H4 (H4-I) (Volvox carteri (Green alga)).